The sequence spans 591 residues: L-fucose isomerase (591 aa).

Catalysis depends on proton acceptor residues E337 and D361. Positions 337, 361, and 528 each coordinate Mn(2+).

This sequence belongs to the L-fucose isomerase family. Homohexamer. The cofactor is Mn(2+).

It localises to the cytoplasm. It catalyses the reaction L-fucose = L-fuculose. The protein operates within carbohydrate degradation; L-fucose degradation; L-lactaldehyde and glycerone phosphate from L-fucose: step 1/3. Functionally, converts the aldose L-fucose into the corresponding ketose L-fuculose. This Escherichia coli O6:H1 (strain CFT073 / ATCC 700928 / UPEC) protein is L-fucose isomerase.